A 214-amino-acid polypeptide reads, in one-letter code: Thymidylate kinase (214 aa).

Position 10-17 (10-17 (GGEGAGKS)) interacts with ATP.

Belongs to the thymidylate kinase family.

The catalysed reaction is dTMP + ATP = dTDP + ADP. Its function is as follows. Phosphorylation of dTMP to form dTDP in both de novo and salvage pathways of dTTP synthesis. The chain is Thymidylate kinase from Brucella suis biovar 1 (strain 1330).